The primary structure comprises 263 residues: Syntaxin pep12 (263 aa).

The segment at 140–159 is disordered; that stretch reads RNVSLSNNSSGQRQPLTESK. The span at 142–159 shows a compositional bias: polar residues; that stretch reads VSLSNNSSGQRQPLTESK. Phosphoserine is present on residues S148 and S163. Residues 169–231 form the t-SNARE coiled-coil homology domain; the sequence is QRLINERQGE…KNASRQLQIA (63 aa).

It belongs to the syntaxin family.

It is found in the endoplasmic reticulum. Its function is as follows. Has a role in vesicle-mediated transport but not with protein transport from Golgi to vesicle. The protein is Syntaxin pep12 (pep12) of Schizosaccharomyces pombe (strain 972 / ATCC 24843) (Fission yeast).